Reading from the N-terminus, the 354-residue chain is tRNA pseudouridine synthase D (354 aa).

Catalysis depends on Asp86, which acts as the Nucleophile. Residues 162-309 (GVPNYFGPQR…LEVGRRALRL (148 aa)) enclose the TRUD domain.

Belongs to the pseudouridine synthase TruD family.

The enzyme catalyses uridine(13) in tRNA = pseudouridine(13) in tRNA. Its function is as follows. Responsible for synthesis of pseudouridine from uracil-13 in transfer RNAs. This is tRNA pseudouridine synthase D from Methylococcus capsulatus (strain ATCC 33009 / NCIMB 11132 / Bath).